The primary structure comprises 304 residues: Recombination-associated protein RdgC (304 aa).

It belongs to the RdgC family.

The protein resides in the cytoplasm. It is found in the nucleoid. Functionally, may be involved in recombination. This Dechloromonas aromatica (strain RCB) protein is Recombination-associated protein RdgC.